The primary structure comprises 242 residues: MMKSLYAVNLVLLLLLAFFAPAPATRELNMRAAPSDSTRVVDYATTERLLRAHSSDKEEQKEEEERAISINFSSLEKIFKKVTSAKTTELQGMLKADEALGSAFKTLKLGTMRIGKDGSVDPKMVAKFLSSRNFKIWSQHAVKINKDDPYGEMLKALTNVFGEKNVAMMILVGNLSRNSRDVAKKLEKAQFYKWYFVDKYKTADEVFTNVLKADRNRIHGYGREKEIWGDYAKYVTTTVMKY.

Residues 1–24 (MMKSLYAVNLVLLLLLAFFAPAPA) form the signal peptide. A RxLR-dEER motif is present at residues 48–66 (RLLRAHSSDKEEQKEEEER).

It belongs to the RxLR effector family.

Its subcellular location is the secreted. It localises to the host cell membrane. Effector that enhances P.infestans colonization of Nicotiana benthamiana leaves. This chain is RxLR effector protein PexRD15, found in Phytophthora infestans (strain T30-4) (Potato late blight agent).